The primary structure comprises 540 residues: Early growth response protein 1 (540 aa).

2 disordered regions span residues 1–105 (MAAA…AESF) and 162–240 (VSMT…PAYP). The span at 64–75 (SSGGGGGGGGGS) shows a compositional bias: gly residues. The span at 167–190 (PPATSSSASSPAASSSASQSPPLS) shows a compositional bias: low complexity. Polar residues predominate over residues 192–201 (AVQSNDSSPI). Residue Lys304 forms a Glycyl lysine isopeptide (Lys-Gly) (interchain with G-Cter in SUMO2) linkage. The disordered stretch occupies residues 317–337 (PSRMRKYPNRPSKTPPHERPY). The segment at 337–361 (YACPVESCDRRFSRSDELTRHIRIH) adopts a C2H2-type 1 zinc-finger fold. A C2H2-type 2; degenerate zinc finger spans residues 366–388 (PQCRISMRNFSRSDHLTTHIRTH). The C2H2-type 3 zinc finger occupies 394–416 (FACDICGRKFARSDERKRHTKIH). Residues 407–482 (DERKRHTKIH…SPGSSTYPSP (76 aa)) form a disordered region. A compositionally biased stretch (basic residues) spans 411-421 (RHTKIHLRQKD). Positions 427 to 482 (SAASAATSSLPSYPSPVATSYPSPATTSYPSPATTSYPSPVPTSYSSPGSSTYPSP) are enriched in low complexity.

Belongs to the EGR C2H2-type zinc-finger protein family. As to quaternary structure, interacts with SNAI1 and SP1 upon 12-O-tetradecanoylphorbol-13-acetate (TPA) induction.

Its subcellular location is the nucleus. The protein resides in the cytoplasm. In terms of biological role, transcriptional regulator. Recognizes and binds to the DNA sequence 5'-GCG(T/G)GGGCG-3'(EGR-site) in the promoter region of target genes. Binds double-stranded target DNA, irrespective of the cytosine methylation status. Regulates the transcription of numerous target genes, and thereby plays an important role in regulating the response to growth factors, DNA damage, and ischemia. Plays a role in the regulation of cell survival, proliferation and cell death. Activates expression of p53/TP53 and TGFB1, and thereby helps prevent tumor formation. Required for normal progress through mitosis and normal proliferation of hepatocytes after partial hepatectomy. Mediates responses to ischemia and hypoxia; regulates the expression of proteins such as IL1B and CXCL2 that are involved in inflammatory processes and development of tissue damage after ischemia. Regulates biosynthesis of luteinizing hormone (LHB) in the pituitary. Regulates the amplitude of the expression rhythms of clock genes: BMAL1, PER2 and NR1D1 in the liver via the activation of PER1 (clock repressor) transcription. Regulates the rhythmic expression of core-clock gene BMAL1 in the suprachiasmatic nucleus (SCN). This chain is Early growth response protein 1 (EGR1), found in Bos taurus (Bovine).